Consider the following 1134-residue polypeptide: Sterol regulatory element-binding protein 1 (1134 aa).

Residues 1–60 (MDELAFGEAALEQTLAEMCELDTAVLNDIEDMLQLINNQDSDFPGLFDAPYAGGETGDTG) are transcriptional activation (acidic). The Cytoplasmic portion of the chain corresponds to 1–477 (MDELAFGEAA…HSRGMLDRSR (477 aa)). The short motif at 27–35 (NDIEDMLQL) is the 9aaTAD element. The segment at 46–73 (LFDAPYAGGETGDTGPSSPGANSPESFS) is disordered. Polar residues predominate over residues 59–69 (TGPSSPGANSP). A phosphoserine mark is found at Ser-96 and Ser-115. Disordered stretches follow at residues 130–149 (LQPA…SFPA) and 170–195 (SGTL…VLPT). A compositionally biased stretch (polar residues) spans 170–179 (SGTLPGNTQQ). The interval 227–487 (QQVPVVLQPH…LALCVLAFLC (261 aa)) is interaction with LMNA. The bHLH domain occupies 317-367 (EKRTAHNAIEKRYRSSINDKIVELKDLVVGTEAKLNKSAVLRKAIDYIRFL). A phosphoserine; by SIK1 mark is found at Ser-331 and Ser-332. The segment at 367–388 (LQHSNQKLKQENLTLRSAHKSK) is leucine-zipper. Ser-389 carries the phosphoserine; by AMPK modification. At Ser-395 the chain carries Phosphoserine; by SIK1. Positions 415–468 (VETLTPPPSDAGSPSQSSPLSFGSRASSSGGSDSEPDSPAFEDSQVKAQRLPSH) are disordered. The segment covering 424–453 (DAGSPSQSSPLSFGSRASSSGGSDSEPDSP) has biased composition (low complexity). Ser-448 carries the post-translational modification Phosphoserine. A helical membrane pass occupies residues 478–498 (LALCVLAFLCLTCNPLASLFG). The Lumenal segment spans residues 499-536 (WGILTPSDATGTHRSSGRSMLEAESRDGSNWTQWLLPP). A helical membrane pass occupies residues 537–557 (LVWLANGLLVLACLALLFVYG). The Cytoplasmic portion of the chain corresponds to 558–1134 (EPVTRPHSGP…LGGGTTVTSS (577 aa)). Ser-1047 carries the phosphoserine modification.

It belongs to the SREBP family. In terms of assembly, forms a tight complex with SCAP, the SCAP-SREBP complex, in the endoplasmic reticulum membrane and the Golgi apparatus. Interacts with PAQR3; the interaction anchors the SCAP-SREBP complex to the Golgi apparatus in low cholesterol conditions. As to quaternary structure, efficient DNA binding of the soluble transcription factor fragment requires dimerization with another bHLH protein. Interacts with CEBPA, the interaction produces a transcriptional synergy. Interacts with LMNA. Processed in the Golgi apparatus, releasing the protein from the membrane. At low cholesterol the SCAP-SREBP complex is recruited into COPII vesicles for export from the endoplasmic reticulum. In the Golgi, complex SREBPs are cleaved sequentially by site-1 (MBTPS1, S1P) and site-2 (MBTPS2, S2P) proteases. The first cleavage by site-1 protease occurs within the luminal loop, the second cleavage by site-2 protease occurs within the first transmembrane domain, releasing the transcription factor from the Golgi membrane. Post-translationally, phosphorylated by AMPK, leading to suppress protein processing and nuclear translocation, and repress target gene expression. Phosphorylation at Ser-389 by SIK1 represses activity possibly by inhibiting DNA-binding. In terms of processing, SCAP-free SREBF1 is ubiquitinated by the BCR(ARMC5) complex, leading to its degradation. Ubiquitinated; the nuclear form has a rapid turnover and is rapidly ubiquitinated and degraded by the proteasome in the nucleus. As to expression, predominant isoform expressed in most tissues. Predominates in liver, adrenal gland, brain and adipose tissue. Also found in kidney, thymus, testis, muscle, jejunum, and ileum. Expressed only in select tissues, such as intestinal epithelial, heart, macrophage and bone marrow dendritic cells. Also found in kidney, thymus, testis, muscle, jejunum, and ileum.

It is found in the endoplasmic reticulum membrane. It localises to the golgi apparatus membrane. The protein resides in the cytoplasmic vesicle. The protein localises to the COPII-coated vesicle membrane. Its subcellular location is the nucleus. With respect to regulation, activation by cleavage is down-regulated upon activation of SIRT3-dependent PRKAA1/AMPK-alpha signaling cascade which leads to inhibition of ATP-consuming lipogenesis to restore cellular energy balance. Precursor of the transcription factor form (Processed sterol regulatory element-binding protein 1), which is embedded in the endoplasmic reticulum membrane. Low sterol concentrations promote processing of this form, releasing the transcription factor form that translocates into the nucleus and activates transcription of genes involved in cholesterol biosynthesis and lipid homeostasis. In terms of biological role, key transcription factor that regulates expression of genes involved in cholesterol biosynthesis and lipid homeostasis. Binds to the sterol regulatory element 1 (SRE-1) (5'-ATCACCCCAC-3'). Has dual sequence specificity binding to both an E-box motif (5'-ATCACGTGA-3') and to SRE-1 (5'-ATCACCCCAC-3'). Regulates the promoters of genes involved in cholesterol biosynthesis and the LDL receptor (LDLR) pathway of sterol regulation. Its function is as follows. Isoform expressed only in select tissues, which has higher transcriptional activity compared to SREBP-1C. Able to stimulate both lipogenic and cholesterogenic gene expression. Has a role in the nutritional regulation of fatty acids and triglycerides in lipogenic organs such as the liver. Required for innate immune response in macrophages by regulating lipid metabolism. Functionally, predominant isoform expressed in most tissues, which has weaker transcriptional activity compared to isoform SREBP-1A. Primarily controls expression of lipogenic gene. Strongly activates global lipid synthesis in rapidly growing cells. The protein is Sterol regulatory element-binding protein 1 of Mus musculus (Mouse).